The following is a 793-amino-acid chain: Flavin carrier protein 1 (793 aa).

The N-terminal stretch at 1 to 21 is a signal peptide; the sequence is MQVLVTLWCLICTCLVLPVAA. At 22 to 163 the chain is on the lumenal side; sequence KKRTLTASSL…FFSNGKTVSQ (142 aa). Asparagine 143 carries an N-linked (GlcNAc...) asparagine glycan. Residues 164-184 form a helical membrane-spanning segment; that stretch reads IGVKWVTAVIAGIGLLTSAVL. At 185 to 194 the chain is on the cytoplasmic side; the sequence is STFGNSTAAS. Residues 195–215 form a helical membrane-spanning segment; it reads HISANTMSLFLYFQSVAVVAM. The Lumenal segment spans residues 216–223; the sequence is QHVDSVPP. A helical transmembrane segment spans residues 224–244; that stretch reads IAAAWSENLAWSMGLIRITFM. Over 245 to 249 the chain is Cytoplasmic; it reads QKIFR. The helical transmembrane segment at 250 to 272 threads the bilayer; that stretch reads WYVEATGGSASLYLTATTMSVLT. The Lumenal segment spans residues 273 to 317; the sequence is QRGLDYLKNTSVYKRAENVLYGNSNTLIFRGIKRMGYRMKIENTA. An N-linked (GlcNAc...) asparagine glycan is attached at asparagine 281. Residues 318-338 form a helical membrane-spanning segment; sequence IVCTGFTFFVLCGYFLAGFIM. Residues 339-372 lie on the Cytoplasmic side of the membrane; it reads ACKYSIELCIRCGWMRSDRFYQFRKNWRSVLKGS. A helical membrane pass occupies residues 373–393; the sequence is LLRYIYIGFTQLTILSFWEFT. Residues 394–397 are Lumenal-facing; the sequence is ERDS. Residues 398 to 418 traverse the membrane as a helical segment; it reads AGVIVIACLFIVLSCGLMAWA. Residues 419–461 are Cytoplasmic-facing; that stretch reads AYRTIFFASKSVEMYNNPAALLYGDEYVLNKYGFFYTMFNAKH. Residues 462 to 482 traverse the membrane as a helical segment; sequence YWWNALLTTYILVKALFVGFA. Topologically, residues 483-484 are lumenal; the sequence is QA. The chain crosses the membrane as a helical span at residues 485–505; the sequence is SGKTQALAIFIIDLAYFVAII. Topologically, residues 506 to 516 are cytoplasmic; that stretch reads RYKPYLDRPTN. Residues 517–537 form a helical membrane-spanning segment; sequence IVNIFICTVTLVNSFLFMFFS. Topologically, residues 538–551 are lumenal; it reads NLFNQKYAVSAIMG. A helical transmembrane segment spans residues 552–572; the sequence is WVFFIMNAAFSLLLLLMILAF. Over 573 to 793 the chain is Cytoplasmic; it reads TTIILFSKNP…KANILDPDYL (221 aa). Serine 610 is modified (phosphoserine). Threonine 626 is modified (phosphothreonine). 2 disordered regions span residues 649 to 674 and 689 to 731; these read YDDE…PTFS and KLGS…QESE. Positions 701–719 are enriched in polar residues; it reads ITQQEVSPDRASSSPNSKS. Serine 771 and serine 774 each carry phosphoserine.

The protein belongs to the transient receptor potential (TRP) ion channel family.

The protein resides in the endoplasmic reticulum membrane. Functionally, may be responsible for the transport of FAD into the endoplasmic reticulum lumen, where it is required for oxidative protein folding. In Saccharomyces cerevisiae (strain ATCC 204508 / S288c) (Baker's yeast), this protein is Flavin carrier protein 1 (FLC1).